We begin with the raw amino-acid sequence, 555 residues long: Glucosylglycerate phosphorylase (555 aa).

Asp231 (nucleophile) is an active-site residue.

The protein belongs to the glycosyl hydrolase 13 family. Glucosylglycerate phosphorylase subfamily.

It carries out the reaction (2R)-2-O-(alpha-D-glucopyranosyl)-glycerate + phosphate = (R)-glycerate + alpha-D-glucose 1-phosphate. Its function is as follows. Catalyzes the reversible phosphorolysis of glucosylglycerate into alpha-D-glucose 1-phosphate (Glc1P) and D-glycerate. May be a regulator of intracellular levels of glucosylglycerate, a compatible solute that primarily protects organisms facing salt stress and very specific nutritional constraints. Has a very strict substrate specificity. Cannot catalyze the phosphorolysis of sucrose or synthesize sucrose from Glc1P and D-fructose. The chain is Glucosylglycerate phosphorylase from Allomeiothermus silvanus (strain ATCC 700542 / DSM 9946 / NBRC 106475 / NCIMB 13440 / VI-R2) (Thermus silvanus).